The chain runs to 465 residues: Cysteine--tRNA ligase (465 aa).

Cys29 contacts Zn(2+). The 'HIGH' region signature appears at Pro31 to Asn41. 3 residues coordinate Zn(2+): Cys209, His234, and Glu238. The 'KMSKS' region motif lies at Lys266–Ser270. Lys269 is an ATP binding site. At Ser270 the chain carries Phosphoserine.

This sequence belongs to the class-I aminoacyl-tRNA synthetase family. As to quaternary structure, monomer. Zn(2+) serves as cofactor.

The protein resides in the cytoplasm. The catalysed reaction is tRNA(Cys) + L-cysteine + ATP = L-cysteinyl-tRNA(Cys) + AMP + diphosphate. The sequence is that of Cysteine--tRNA ligase from Bacillus cytotoxicus (strain DSM 22905 / CIP 110041 / 391-98 / NVH 391-98).